The following is a 55-amino-acid chain: Lantibiotic nisin-U (55 aa).

The propeptide occupies 1 to 24; the sequence is MNNEDFNLDLIKISKENNSGASPR. Thr26 carries the 2,3-didehydrobutyrine modification. Residues 27-31 constitute a cross-link (lanthionine (Ser-Cys)); the sequence is SKSLC. At Ser29 the chain carries 2,3-didehydroalanine (Ser). 4 cross-links (beta-methyllanthionine (Thr-Cys)) span residues 32 to 35, 37 to 43, 47 to 50, and 49 to 52; these read TPGC, TGILMTC, TATC, and TCGC. Thr42 carries the post-translational modification 2,3-didehydrobutyrine.

Maturation of lantibiotics involves the enzymatic conversion of Thr, and Ser into dehydrated AA and the formation of thioether bonds with cysteine. This is followed by membrane translocation and cleavage of the modified precursor.

It localises to the secreted. In terms of biological role, lanthionine-containing peptide antibiotic (lantibiotic) active on Gram-positive bacteria. The bactericidal activity of lantibiotics is based on depolarization of energized bacterial cytoplasmic membranes, initiated by the formation of aqueous transmembrane pores. This chain is Lantibiotic nisin-U (nsuA), found in Streptococcus uberis.